We begin with the raw amino-acid sequence, 1184 residues long: PR domain zinc finger protein 10 (1184 aa).

The segment at 122-162 (LDAKEEEEEEEDEDEDTEEEEEEDAEDTDVDDWQPDPPRPF) is disordered. The segment covering 125–155 (KEEEEEEEDEDEDTEEEEEEDAEDTDVDDWQ) has biased composition (acidic residues). The 119-residue stretch at 202 to 320 (LPLVLYIDRF…PKQELKVWYA (119 aa)) folds into the SET domain. The tract at residues 221-325 (IPKRTQFGPV…KVWYAASYAE (105 aa)) is N-terminal PR domain; essential for transcriptional activator activity. A C2H2-type 1 zinc finger spans residues 349 to 371 (WPCYECNRRFISSEQLQQHLNSH). Lys-374 participates in a covalent cross-link: Glycyl lysine isopeptide (Lys-Gly) (interchain with G-Cter in SUMO2). The span at 381 to 401 (TRGRGRGRGKRRFGPGRRPGR) shows a compositional bias: basic residues. Residues 381-405 (TRGRGRGRGKRRFGPGRRPGRPPKF) form a disordered region. Ser-418 bears the Phosphoserine mark. Position 422 is a phosphothreonine (Thr-422). Residues 444 to 487 (GLDQPEQASIPIPQLPQETPPSLEQEPETHTLHLQPQQEESLVP) form a disordered region. Polar residues predominate over residues 475 to 487 (LHLQPQQEESLVP). 8 C2H2-type zinc fingers span residues 520–542 (FKCLQCGKAFREKDKLDQHLRFH), 550–572 (LTCDLCNKGFISSASLESHMKLH), 578–600 (YSCIFCPESFDRLDLLKDHVAIH), 606–629 (FTCPTCKKRFPDFIQVKKHVRSFH), 634–656 (YQCTECDKAFCRPDKLRLHMLRH), 662–685 (FLCSTCGKQFKRKDKLREHMQRMH), 717–740 (FKCRLCMMGFRRRGMLVNHLSKRH), and 850–873 (VCCPHCSKQYSSKTKMVQHIRKKH). The interval 917–1164 (QAMTELSQTL…TGPSQQQTTQ (248 aa)) is C-terminal glutamine-rich region; essential for transcriptional activator activity. A disordered region spans residues 1004–1054 (EPAPAAPSASQVAGQPLSPSAQQVQQGLSPSHIQGSSSTQGQALQQQQNSS). Positions 1014–1036 (QVAGQPLSPSAQQVQQGLSPSHI) are enriched in polar residues. The span at 1037 to 1054 (QGSSSTQGQALQQQQNSS) shows a compositional bias: low complexity.

Belongs to the class V-like SAM-binding methyltransferase superfamily. As to expression, present in brain, liver, kidney, spleen and thymus (at protein level).

Its subcellular location is the nucleus. Functionally, transcriptional activator, essential for early embryonic development and survival of embryonic stem cells (ESCs). Supports cell growth and survival during early development by transcriptionally activating the expression of the translation initiation factor EIF3B, to sustain global translation. Activates the transcription of FLNC. This Mus musculus (Mouse) protein is PR domain zinc finger protein 10 (Prdm10).